Consider the following 434-residue polypeptide: Eukaryotic translation initiation factor 3 subunit E (434 aa).

Positions 219–392 (FFNHPKGRDL…GHVVMGTQPL (174 aa)) constitute a PCI domain.

It belongs to the eIF-3 subunit E family. As to quaternary structure, component of the eukaryotic translation initiation factor 3 (eIF-3) complex. The eIF-3 complex interacts with pix. Interacts with mxt.

Its subcellular location is the cytoplasm. In terms of biological role, component of the eukaryotic translation initiation factor 3 (eIF-3) complex, which is involved in protein synthesis of a specialized repertoire of mRNAs and, together with other initiation factors, stimulates binding of mRNA and methionyl-tRNAi to the 40S ribosome. The eIF-3 complex specifically targets and initiates translation of a subset of mRNAs involved in cell proliferation. This chain is Eukaryotic translation initiation factor 3 subunit E (eIF3-S6), found in Drosophila persimilis (Fruit fly).